Reading from the N-terminus, the 158-residue chain is Regenerating islet-derived protein 4 (158 aa).

The first 22 residues, 1–22, serve as a signal peptide directing secretion; that stretch reads MASRSMRLLLLLSCLAKTGVLG. A disulfide bond links C30 and C41. The C-type lectin domain occupies 37 to 155; the sequence is HKSNCYGYFR…CNKRQHFLCK (119 aa). N-linked (GlcNAc...) asparagine glycosylation occurs at N50. Intrachain disulfides connect C58–C154 and C129–C146. Residues 98–103 and 135–137 contribute to the a carbohydrate site; these read DPQKRQ and NNN.

As to expression, highly expressed in the gastrointestinal tract including the duodenum, jejunum, ileum, ileocecum, appendix, descending colon, pancreas and small intestine. Weakly expressed in normal colon and stomach. Strongly expressed in most colorectal tumors than in normal colon. Preferentially expressed in mucinous tumors and in some cases neuro-endocrine tumors. Expressed in mucus-secreting cells and enterocyte-like cells. In small intestine expressed at the basal perinuclear zone of goblet cells.

The protein localises to the secreted. Calcium-independent lectin displaying mannose-binding specificity and able to maintain carbohydrate recognition activity in an acidic environment. May be involved in inflammatory and metaplastic responses of the gastrointestinal epithelium. The chain is Regenerating islet-derived protein 4 (REG4) from Homo sapiens (Human).